The primary structure comprises 829 residues: Probable receptor-like protein kinase At5g59700 (829 aa).

Positions 1–24 (MGGEKFGFLIWILSIPCLIFLCYG) are cleaved as a signal peptide. Topologically, residues 25 to 406 (YVPVDNYLIN…SSTTKKNVGM (382 aa)) are extracellular. Residues Asn40, Asn216, Asn279, and Asn380 are each glycosylated (N-linked (GlcNAc...) asparagine). A helical transmembrane segment spans residues 407 to 427 (IIGLTIGSLLALVVLGGFFVL). Over 428–829 (YKKRGRDQDG…FSQLIKSEGR (402 aa)) the chain is Cytoplasmic. One can recognise a Protein kinase domain in the interval 482 to 755 (FDENRAIGVG…GDVLWNLEYA (274 aa)). ATP is bound by residues 488-496 (IGVGGFGKV) and Lys510. Asp606 (proton acceptor) is an active-site residue.

This sequence belongs to the protein kinase superfamily. Ser/Thr protein kinase family.

It localises to the cell membrane. The chain is Probable receptor-like protein kinase At5g59700 from Arabidopsis thaliana (Mouse-ear cress).